A 481-amino-acid polypeptide reads, in one-letter code: Glutamyl-tRNA(Gln) amidotransferase subunit A (481 aa).

Catalysis depends on charge relay system residues Lys76 and Ser151. Ser175 serves as the catalytic Acyl-ester intermediate.

Belongs to the amidase family. GatA subfamily. As to quaternary structure, heterotrimer of A, B and C subunits.

It carries out the reaction L-glutamyl-tRNA(Gln) + L-glutamine + ATP + H2O = L-glutaminyl-tRNA(Gln) + L-glutamate + ADP + phosphate + H(+). Functionally, allows the formation of correctly charged Gln-tRNA(Gln) through the transamidation of misacylated Glu-tRNA(Gln) in organisms which lack glutaminyl-tRNA synthetase. The reaction takes place in the presence of glutamine and ATP through an activated gamma-phospho-Glu-tRNA(Gln). The polypeptide is Glutamyl-tRNA(Gln) amidotransferase subunit A (Neisseria meningitidis serogroup A / serotype 4A (strain DSM 15465 / Z2491)).